The primary structure comprises 157 residues: Phosphopantetheine adenylyltransferase (157 aa).

Residue T10 participates in substrate binding. Residues 10-11 (TF) and H18 each bind ATP. Substrate-binding residues include K42, L74, and R88. Residues 89–91 (GLR), E99, and 124–130 (NAFISSS) contribute to the ATP site.

Belongs to the bacterial CoaD family. As to quaternary structure, homohexamer. Mg(2+) is required as a cofactor.

Its subcellular location is the cytoplasm. It catalyses the reaction (R)-4'-phosphopantetheine + ATP + H(+) = 3'-dephospho-CoA + diphosphate. It participates in cofactor biosynthesis; coenzyme A biosynthesis; CoA from (R)-pantothenate: step 4/5. Functionally, reversibly transfers an adenylyl group from ATP to 4'-phosphopantetheine, yielding dephospho-CoA (dPCoA) and pyrophosphate. In Helicobacter pylori (strain Shi470), this protein is Phosphopantetheine adenylyltransferase.